Reading from the N-terminus, the 150-residue chain is D-aminoacyl-tRNA deacylase (150 aa).

The Gly-cisPro motif, important for rejection of L-amino acids motif lies at 138–139; the sequence is GP.

This sequence belongs to the DTD family. As to quaternary structure, homodimer.

The protein localises to the cytoplasm. It catalyses the reaction glycyl-tRNA(Ala) + H2O = tRNA(Ala) + glycine + H(+). The catalysed reaction is a D-aminoacyl-tRNA + H2O = a tRNA + a D-alpha-amino acid + H(+). In terms of biological role, an aminoacyl-tRNA editing enzyme that deacylates mischarged D-aminoacyl-tRNAs. Also deacylates mischarged glycyl-tRNA(Ala), protecting cells against glycine mischarging by AlaRS. Acts via tRNA-based rather than protein-based catalysis; rejects L-amino acids rather than detecting D-amino acids in the active site. By recycling D-aminoacyl-tRNA to D-amino acids and free tRNA molecules, this enzyme counteracts the toxicity associated with the formation of D-aminoacyl-tRNA entities in vivo and helps enforce protein L-homochirality. The sequence is that of D-aminoacyl-tRNA deacylase from Dechloromonas aromatica (strain RCB).